A 276-amino-acid chain; its full sequence is Undecaprenyl-diphosphatase 1 (276 aa).

5 helical membrane passes run 85–105 (MNVV…EKTI), 108–128 (VLFA…VILW), 187–207 (VATE…TLYE), 217–237 (VDSI…AFAC), and 253–273 (FAWY…SGWI).

It belongs to the UppP family.

Its subcellular location is the cell inner membrane. The enzyme catalyses di-trans,octa-cis-undecaprenyl diphosphate + H2O = di-trans,octa-cis-undecaprenyl phosphate + phosphate + H(+). Its function is as follows. Catalyzes the dephosphorylation of undecaprenyl diphosphate (UPP). Confers resistance to bacitracin. This is Undecaprenyl-diphosphatase 1 from Burkholderia thailandensis (strain ATCC 700388 / DSM 13276 / CCUG 48851 / CIP 106301 / E264).